The following is a 489-amino-acid chain: MKYKDLRDFIAQLEQNGQLKRITREIDPYLEMTEISDRTLRAGGPALLFENPKGYSMPVLTNLFGTPDRVAMGMGQPNVGALRQVGTWLSYLKEPEPPRGLKELMEKLPIFKQVLNMPTKRLSSAPCQQLVLEGEAVDLDQIPIQHCWPGDVAPLVTWGLTITRGPYKKRQNLGIYRQQKIGKNKLIMRWLDHRGGAIDFREWQEAHPGERFPVVVALGADPATILGAVTPVPDSLSEYAFAGLLRGSRTEVVKALSCDLEVPASAEIVLEGYLEPGELAPEGPYGDHTGYYNEVDEFPVFTITHMTMRRDAIYHSTYTGRPPDEPAVLGVALNEVFVPLLQKQFPEIVDFYLPPEGCSYRMAVVTIKKRYPGHAKRVMLGVWSFLRQFMYTKFVIVCDDDINARDWKDVIWAITTRMDPARDTTLIEHTPIDYLDFASPVSGLGSKMGLDATNKWPGETNREWGQPIVQDEAVKQKVDSIWAELNILG.

A Mn(2+)-binding site is contributed by N172. Prenylated FMN contacts are provided by residues 175-177 (IYR), 189-191 (RWL), and 194-195 (RG). E238 is a binding site for Mn(2+). D287 acts as the Proton donor in catalysis.

Belongs to the UbiD family. In terms of assembly, homohexamer. Requires prenylated FMN as cofactor. Mn(2+) serves as cofactor.

It localises to the cell membrane. The enzyme catalyses a 4-hydroxy-3-(all-trans-polyprenyl)benzoate + H(+) = a 2-(all-trans-polyprenyl)phenol + CO2. It functions in the pathway cofactor biosynthesis; ubiquinone biosynthesis. Its function is as follows. Catalyzes the decarboxylation of 3-octaprenyl-4-hydroxy benzoate to 2-octaprenylphenol, an intermediate step in ubiquinone biosynthesis. The sequence is that of 3-octaprenyl-4-hydroxybenzoate carboxy-lyase from Aeromonas salmonicida (strain A449).